We begin with the raw amino-acid sequence, 328 residues long: Tryptophan--tRNA ligase (328 aa).

Residues 8–10 and 16–17 each bind ATP; these read RPT and GH. The 'HIGH' region signature appears at 9-17; sequence PTGKLHIGH. Residue Asp-136 coordinates L-tryptophan. Residues 148–150, Leu-186, and 193–197 contribute to the ATP site; these read GED and KMSKS. The short motif at 193–197 is the 'KMSKS' region element; it reads KMSKS.

The protein belongs to the class-I aminoacyl-tRNA synthetase family. As to quaternary structure, homodimer.

The protein localises to the cytoplasm. It catalyses the reaction tRNA(Trp) + L-tryptophan + ATP = L-tryptophyl-tRNA(Trp) + AMP + diphosphate + H(+). Catalyzes the attachment of tryptophan to tRNA(Trp). This Thermotoga maritima (strain ATCC 43589 / DSM 3109 / JCM 10099 / NBRC 100826 / MSB8) protein is Tryptophan--tRNA ligase.